A 256-amino-acid polypeptide reads, in one-letter code: Thioredoxin-dependent peroxide reductase, mitochondrial (256 aa).

The N-terminal 61 residues, 1–61, are a transit peptide targeting the mitochondrion; the sequence is MAAAVGRLLR…KLFSTSSSCH (61 aa). The 159-residue stretch at 63–221 folds into the Thioredoxin domain; the sequence is PAVTQHAPYF…TLRLVKAFQY (159 aa). Residue K83 is modified to N6-succinyllysine. The residue at position 91 (K91) is an N6-acetyllysine; alternate. Residue K91 is modified to N6-succinyllysine; alternate. C108 serves as the catalytic Cysteine sulfenic acid (-SOH) intermediate. A Phosphothreonine modification is found at T146.

The protein belongs to the peroxiredoxin family. AhpC/Prx1 subfamily. In terms of assembly, homodimer; disulfide-linked, upon oxidation. 6 homodimers assemble to form a ring-like dodecamer. Interacts with NEK6. Interacts with LRRK2. Interacts with MAP3K13. Interacts with RPS6KC1 (via PX domain). Phosphorylated by LRRK2; phosphorylation reduces perodixase activity. Post-translationally, the enzyme can be inactivated by further oxidation of the cysteine sulfenic acid (C(P)-SOH) to sulphinic acid (C(P)-SO2H) and sulphonic acid (C(P)-SO3H) instead of its condensation to a disulfide bond. In terms of processing, S-palmitoylated.

Its subcellular location is the mitochondrion. It is found in the cytoplasm. The protein resides in the early endosome. It catalyses the reaction a hydroperoxide + [thioredoxin]-dithiol = an alcohol + [thioredoxin]-disulfide + H2O. In terms of biological role, thiol-specific peroxidase that catalyzes the reduction of hydrogen peroxide and organic hydroperoxides to water and alcohols, respectively. Plays a role in cell protection against oxidative stress by detoxifying peroxides. Acts synergistically with MAP3K13 to regulate the activation of NF-kappa-B in the cytosol. Required for the maintenance of physical strength. This is Thioredoxin-dependent peroxide reductase, mitochondrial (PRDX3) from Homo sapiens (Human).